A 393-amino-acid polypeptide reads, in one-letter code: MEGFSRDLLCGIGKGDAPPPEKRPGQLREEMEEVELSLGLSLGGRFGLDRKGSKLPRSSSVAAMLTTPVEVPAPPSLSRASSLPVQAEASEVERKQGLDGWGSCREGGGLGVQHAARLPASGNPSSASSVGEGQILQGTLMRTSSLPAVIEASGNDDWKKRKEAQSLKRLEVKKKRIERRNSLACNTSKEAAGQSPKEMNANTDKLVSSDETIVSANESHSSGKHLVKGLPPKYQATITSEDSSSAMRKKPNSAFKGTAITEEQNSSSSVPSSGEAISSVTAPSLPLLSLVPITATLGSREDQSILGRAGARANGMGDVERRMMQEMPGVFTKGLSNGSRVEGFLYKYSKGEVRIVCICHGSFLTPSEFVEHAGAGKVDNPLRHIVVSATPNL.

Disordered regions lie at residues 1–27 (MEGF…PGQL) and 155–200 (NDDW…KEMN). Residues 156–170 (DDWKKRKEAQSLKRL) show a composition bias toward basic and acidic residues.

The protein belongs to the Ninja family.

The protein resides in the nucleus. This is Ninja-family protein 1 from Zea mays (Maize).